Reading from the N-terminus, the 731-residue chain is MRLIVVSNRLPVTISPSGEIRESVGGLATAMKSFLGAVNGGRELGLEEVVWVGWSGVPSERESNDLRERLRGMGLEPVPLSSEEVEGFYEGFSNSTLWPLFHGFSEYATYEEKHWRAYRGVNEKYAKAVVALARPGDLVWIHDYHLMLAPAIVREAAEVGVGFFLHIPFPPAELLQLLPSEWRREILEGLLGSDLVGFHTYEYSANFSRSVVRFLGYKVEMGAIAVGHRRVRVGVFPIGIDFDRFYNSSQDPSVVEEMAKLREMLGRAKVVFSIDRLDYTKGVLRRVAAWERFLREHPEWRGRAVFVLVVVPSRTGVPMYEEMKRQIDREVGRINGELGELNWVPIVYLYRFIPSPTLMALYNIADVALITPLRDGMNLVAKEFVASKRDCRGVLILSELAGASKELAEALVINPNDVGGTAEAIAEALSMSEDEQCRRIRAMQERLRMRDVVRWGTDFIYSLISAKSAREEVEKALRYMEELSVDKLKSDFAKAKRRLLLLDYDGTLVPHYPYPHMAVPDGDLLELLSRLAALPETAVYVVSGRGRDFLDGWLGRLPVGLVAEHGFFLKHPGGEWKSLGKVDPSWRQYAKGIMEDFASNVPGSFVEVKEAGIAWHYRNADETIAEKAVVELIDALSNALAGSGLSILRGKKVVEVRPAGYTKGTAAKMLLDELSPDFVFVAGDDETDEGMFEVAPQSAYTVKVGPGPTLAKFRVGDYRGLRSLLEQLRPP.

Residues 1–464 (MRLIVVSNRL…WGTDFIYSLI (464 aa)) form an alpha,alpha-trehalose-phosphate synthase region. Arg-9 is a D-glucose 6-phosphate binding site. Residue 25-26 (GG) coordinates UDP-alpha-D-glucose. 2 residues coordinate D-glucose 6-phosphate: Tyr-89 and Asp-143. Residues Arg-276 and Lys-281 each coordinate UDP-alpha-D-glucose. Arg-314 contributes to the D-glucose 6-phosphate binding site. 379–383 (LVAKE) provides a ligand contact to UDP-alpha-D-glucose. Residues 465-731 (SAKSAREEVE…RSLLEQLRPP (267 aa)) form a trehalose-6-phosphate phosphatase region. The active-site Nucleophile is Asp-503. The Mg(2+) site is built by Asp-503, Asp-505, and Asp-684. 503 to 505 (DYD) provides a ligand contact to alpha,alpha-trehalose 6-phosphate.

This sequence in the N-terminal section; belongs to the glycosyltransferase 20 family. It in the C-terminal section; belongs to the trehalose phosphatase family. As to quaternary structure, may interact with the putative glycosyltransferase (GT) TTX_1305. TTX_1305 is required for the trehalose-6-phosphate synthase activity of tpsp. Requires Mg(2+) as cofactor.

It carries out the reaction D-glucose 6-phosphate + UDP-alpha-D-glucose = alpha,alpha-trehalose 6-phosphate + UDP + H(+). It catalyses the reaction alpha,alpha-trehalose 6-phosphate + H2O = alpha,alpha-trehalose + phosphate. It participates in glycan biosynthesis; trehalose biosynthesis. In terms of biological role, bifunctional enzyme which catalyzes the transfer of glucose from UDP-alpha-D-glucose to glucose-6-phosphate to form trehalose-6-phosphate (Tre6P) and removes the phosphate from Tre6P to produce free trehalose. This is Bifunctional trehalose-6-phosphate synthase/phosphatase from Thermoproteus tenax (strain ATCC 35583 / DSM 2078 / JCM 9277 / NBRC 100435 / Kra 1).